Here is a 57-residue protein sequence, read N- to C-terminus: Temporin-ALk (57 aa).

Positions 1–22 are cleaved as a signal peptide; sequence MFTLKKSLLLLFFLGTINLSLC. The propeptide occupies 23–46; the sequence is EQERNAEEERRDDLGERQAEVEKR. The residue at position 56 (S56) is a Serine amide.

It belongs to the frog skin active peptide (FSAP) family. Temporin subfamily. As to expression, expressed by the skin glands.

It is found in the secreted. In terms of biological role, antimicrobial peptide with weak activity against Gram-positive and Gram-negative bacteria and against fungi. Has been tested against S.aureus (MIC=15.0 ug/mL), B.pumilus (no activity detected), B.cereus (no activity detected), E.coli (MIC=30.0 ug/mL), B.dysenteriae (MIC=60.0 ug/mL), A.cacoaceticus (MIC=75.0 ug/mL), P.aeruginosa (MIC=25.0 ug/mL) and C.albicans (MIC=15.0 ug/mL). Also shows a weak hemolytic activity. This chain is Temporin-ALk, found in Amolops loloensis (Lolokou Sucker Frog).